A 311-amino-acid chain; its full sequence is Methionyl-tRNA formyltransferase (311 aa).

Residue 110–113 coordinates (6S)-5,6,7,8-tetrahydrofolate; that stretch reads SLLP.

The protein belongs to the Fmt family.

The enzyme catalyses L-methionyl-tRNA(fMet) + (6R)-10-formyltetrahydrofolate = N-formyl-L-methionyl-tRNA(fMet) + (6S)-5,6,7,8-tetrahydrofolate + H(+). Attaches a formyl group to the free amino group of methionyl-tRNA(fMet). The formyl group appears to play a dual role in the initiator identity of N-formylmethionyl-tRNA by promoting its recognition by IF2 and preventing the misappropriation of this tRNA by the elongation apparatus. The chain is Methionyl-tRNA formyltransferase from Streptococcus pyogenes serotype M2 (strain MGAS10270).